Here is a 184-residue protein sequence, read N- to C-terminus: UPF0301 protein Sden_2674 (184 aa).

Belongs to the UPF0301 (AlgH) family.

The protein is UPF0301 protein Sden_2674 of Shewanella denitrificans (strain OS217 / ATCC BAA-1090 / DSM 15013).